Reading from the N-terminus, the 1111-residue chain is Protein NETWORKED 1C (1111 aa).

One can recognise an NAB domain in the interval 13–93 (YSWWWDSHNT…ERYNHATGVI (81 aa)). 3 coiled-coil regions span residues 202 to 287 (SESE…KESS), 314 to 605 (ERAS…LISE), and 642 to 752 (KTIG…LESK). The interval 850-870 (TGGGRSMRKQDGGSGRMRKQS) is disordered. A coiled-coil region spans residues 943–1009 (NREVNKRRVL…EGEEAIEKLF (67 aa)).

The protein belongs to the NET family.

Its function is as follows. Plant-specific actin binding protein. May be part of a membrane-cytoskeletal adapter complex. This chain is Protein NETWORKED 1C, found in Arabidopsis thaliana (Mouse-ear cress).